The primary structure comprises 80 residues: Exodeoxyribonuclease 7 small subunit (80 aa).

It belongs to the XseB family. In terms of assembly, heterooligomer composed of large and small subunits.

Its subcellular location is the cytoplasm. The catalysed reaction is Exonucleolytic cleavage in either 5'- to 3'- or 3'- to 5'-direction to yield nucleoside 5'-phosphates.. In terms of biological role, bidirectionally degrades single-stranded DNA into large acid-insoluble oligonucleotides, which are then degraded further into small acid-soluble oligonucleotides. The chain is Exodeoxyribonuclease 7 small subunit from Photobacterium profundum (strain SS9).